We begin with the raw amino-acid sequence, 176 residues long: Envelope protein 167 (176 aa).

Residue Met-1 is a topological domain, intravirion. Residues 2–22 (YLVLLIAIILFITIILVIFLI) form a helical membrane-spanning segment. Over 23–176 (SGLFYPEQNP…AVMAIPRKVL (154 aa)) the chain is Virion surface.

The protein belongs to the asfivirus envelope protein p22 family.

It localises to the virion membrane. The protein localises to the host cell membrane. This chain is Envelope protein 167, found in African swine fever virus (isolate Warthog/Namibia/Wart80/1980) (ASFV).